A 594-amino-acid chain; its full sequence is Glutamate decarboxylase 1 (594 aa).

Positions 1–13 are enriched in low complexity; it reads MASSTPSSSATSS. A disordered region spans residues 1 to 25; that stretch reads MASSTPSSSATSSNAGPDPNTTNLR. S78 is modified (phosphoserine). 190 to 192 lines the 4-aminobutanoate pocket; sequence QLS. K405 carries the N6-(pyridoxal phosphate)lysine modification. Position 567 (R567) interacts with 4-aminobutanoate.

This sequence belongs to the group II decarboxylase family. As to quaternary structure, homodimer. Pyridoxal 5'-phosphate serves as cofactor.

The enzyme catalyses L-glutamate + H(+) = 4-aminobutanoate + CO2. Its function is as follows. Catalyzes the synthesis of the inhibitory neurotransmitter gamma-aminobutyric acid (GABA) with pyridoxal 5'-phosphate as cofactor. This chain is Glutamate decarboxylase 1 (GAD1), found in Sus scrofa (Pig).